Reading from the N-terminus, the 316-residue chain is dTDP-4-dehydro-6-deoxyglucose reductase (316 aa).

Residue 16-17 (FI) coordinates NAD(+). Catalysis depends on Tyr-151, which acts as the Proton acceptor. Lys-155 provides a ligand contact to NAD(+).

This sequence belongs to the NAD(P)-dependent epimerase/dehydratase family.

It catalyses the reaction dTDP-alpha-D-fucose + NAD(+) = dTDP-4-dehydro-6-deoxy-alpha-D-glucose + NADH + H(+). It carries out the reaction dTDP-alpha-D-fucose + NADP(+) = dTDP-4-dehydro-6-deoxy-alpha-D-glucose + NADPH + H(+). Its pathway is bacterial outer membrane biogenesis; LPS O-antigen biosynthesis. Its activity is regulated as follows. Inhibited by Cu(2+), while other divalent cations such as Ca(2+), Co(2+), Fe(2+), Mn(2+) and Mg(2+) have no obvious effects on enzyme activity. Catalyzes the stereospecific reduction of the C-4 keto group of dTDP-4-dehydro-6-deoxy-D-glucose, leading to dTDP-D-fucopyranose. This is a step in the biosynthesis of D-fucofuranose, a component of E.coli O52 O antigen. Is more efficient using NADH than NADPH as cosubstrate. This Escherichia coli protein is dTDP-4-dehydro-6-deoxyglucose reductase (fcf1).